The primary structure comprises 835 residues: Translation initiation factor IF-2 (835 aa).

Residues 1–240 (MSDSDGKKTL…RKQERARQKA (240 aa)) form a disordered region. Residues 50–59 (AGKGGAGGVA) show a composition bias toward gly residues. Over residues 86–152 (KAREAEEAAQ…AEAAKKRAAA (67 aa)) the composition is skewed to basic and acidic residues. A compositionally biased stretch (low complexity) spans 153 to 169 (DKAAAAAPKSDAGVAPA). Basic and acidic residues predominate over residues 184–205 (RKAEREREERGRGAKGRNDGGR). One can recognise a tr-type G domain in the interval 332–500 (PRPPVITIMG…AIALQAEILE (169 aa)). The interval 341 to 348 (GHVDHGKT) is G1. Residue 341-348 (GHVDHGKT) participates in GTP binding. Positions 366-370 (GITQH) are G2. The G3 stretch occupies residues 388-391 (DTPG). Residues 388–392 (DTPGH) and 442–445 (NKID) contribute to the GTP site. The G4 stretch occupies residues 442 to 445 (NKID). A G5 region spans residues 478–480 (SAH).

Belongs to the TRAFAC class translation factor GTPase superfamily. Classic translation factor GTPase family. IF-2 subfamily.

Its subcellular location is the cytoplasm. Its function is as follows. One of the essential components for the initiation of protein synthesis. Protects formylmethionyl-tRNA from spontaneous hydrolysis and promotes its binding to the 30S ribosomal subunits. Also involved in the hydrolysis of GTP during the formation of the 70S ribosomal complex. This is Translation initiation factor IF-2 from Ruegeria sp. (strain TM1040) (Silicibacter sp.).